A 363-amino-acid chain; its full sequence is Peptide chain release factor 2 (363 aa).

Glutamine 251 is subject to N5-methylglutamine.

Belongs to the prokaryotic/mitochondrial release factor family. Post-translationally, methylated by PrmC. Methylation increases the termination efficiency of RF2.

It is found in the cytoplasm. Functionally, peptide chain release factor 2 directs the termination of translation in response to the peptide chain termination codons UGA and UAA. The protein is Peptide chain release factor 2 of Helicobacter pylori (strain G27).